The following is a 147-amino-acid chain: Small ribosomal subunit protein uS12 (147 aa).

It belongs to the universal ribosomal protein uS12 family. Part of the 30S ribosomal subunit.

Its function is as follows. With S4 and S5 plays an important role in translational accuracy. Located at the interface of the 30S and 50S subunits. The sequence is that of Small ribosomal subunit protein uS12 from Thermococcus celer.